A 265-amino-acid chain; its full sequence is tRNA pseudouridine synthase A (265 aa).

Aspartate 58 serves as the catalytic Nucleophile. Position 116 (tyrosine 116) interacts with substrate.

This sequence belongs to the tRNA pseudouridine synthase TruA family. In terms of assembly, homodimer.

The catalysed reaction is uridine(38/39/40) in tRNA = pseudouridine(38/39/40) in tRNA. In terms of biological role, formation of pseudouridine at positions 38, 39 and 40 in the anticodon stem and loop of transfer RNAs. In Neisseria meningitidis serogroup C (strain 053442), this protein is tRNA pseudouridine synthase A.